Consider the following 161-residue polypeptide: ATP synthase subunit b 1 (161 aa).

A helical membrane pass occupies residues 3–23 (LDATFYALVGLILFFVLIAYL).

This sequence belongs to the ATPase B chain family. In terms of assembly, F-type ATPases have 2 components, F(1) - the catalytic core - and F(0) - the membrane proton channel. F(1) has five subunits: alpha(3), beta(3), gamma(1), delta(1), epsilon(1). F(0) has three main subunits: a(1), b(2) and c(10-14). The alpha and beta chains form an alternating ring which encloses part of the gamma chain. F(1) is attached to F(0) by a central stalk formed by the gamma and epsilon chains, while a peripheral stalk is formed by the delta and b chains.

The protein localises to the cell inner membrane. F(1)F(0) ATP synthase produces ATP from ADP in the presence of a proton or sodium gradient. F-type ATPases consist of two structural domains, F(1) containing the extramembraneous catalytic core and F(0) containing the membrane proton channel, linked together by a central stalk and a peripheral stalk. During catalysis, ATP synthesis in the catalytic domain of F(1) is coupled via a rotary mechanism of the central stalk subunits to proton translocation. Functionally, component of the F(0) channel, it forms part of the peripheral stalk, linking F(1) to F(0). The polypeptide is ATP synthase subunit b 1 (Rhizobium meliloti (strain 1021) (Ensifer meliloti)).